A 131-amino-acid polypeptide reads, in one-letter code: Replicase polyprotein 1ab (131 aa).

In terms of domain architecture, Nidovirus-type SAM-dependent 2'-O-MTase spans 1–128 (ITEFSWNKYL…KLLNFGNHFI (128 aa)).

Functionally, the replicase polyprotein of coronaviruses is a multifunctional protein: it contains the activities necessary for the transcription of negative stranded RNA, leader RNA, subgenomic mRNAs and progeny virion RNA as well as proteinases responsible for the cleavage of the polyprotein into functional products. This is Replicase polyprotein 1ab (rep) from Sus scrofa (Pig).